A 194-amino-acid chain; its full sequence is 7-methyl-GTP pyrophosphatase (194 aa).

Residue Asp-71 is the Proton acceptor of the active site.

It belongs to the Maf family. YceF subfamily. A divalent metal cation is required as a cofactor.

The protein resides in the cytoplasm. It carries out the reaction N(7)-methyl-GTP + H2O = N(7)-methyl-GMP + diphosphate + H(+). Nucleoside triphosphate pyrophosphatase that hydrolyzes 7-methyl-GTP (m(7)GTP). May have a dual role in cell division arrest and in preventing the incorporation of modified nucleotides into cellular nucleic acids. The polypeptide is 7-methyl-GTP pyrophosphatase (Aromatoleum aromaticum (strain DSM 19018 / LMG 30748 / EbN1) (Azoarcus sp. (strain EbN1))).